A 208-amino-acid polypeptide reads, in one-letter code: Adenylyl-sulfate kinase (208 aa).

31 to 38 is an ATP binding site; the sequence is GLSGSGKS. Residue S105 is the Phosphoserine intermediate of the active site.

This sequence belongs to the APS kinase family.

The catalysed reaction is adenosine 5'-phosphosulfate + ATP = 3'-phosphoadenylyl sulfate + ADP + H(+). Its pathway is sulfur metabolism; hydrogen sulfide biosynthesis; sulfite from sulfate: step 2/3. Its function is as follows. Catalyzes the synthesis of activated sulfate. In Pseudomonas entomophila (strain L48), this protein is Adenylyl-sulfate kinase.